Reading from the N-terminus, the 804-residue chain is Leucine--tRNA ligase (804 aa).

Positions 40-51 match the 'HIGH' region motif; the sequence is PYPSGAGLHVGH. The 'KMSKS' region signature appears at 576–580; the sequence is KMSKS. Residue Lys579 coordinates ATP.

The protein belongs to the class-I aminoacyl-tRNA synthetase family.

The protein resides in the cytoplasm. It catalyses the reaction tRNA(Leu) + L-leucine + ATP = L-leucyl-tRNA(Leu) + AMP + diphosphate. The protein is Leucine--tRNA ligase of Staphylococcus aureus (strain bovine RF122 / ET3-1).